The sequence spans 483 residues: Membrane-bound lytic murein transglycosylase F (483 aa).

Positions 1–18 (MKGLIARFIAGFALLLWA) are cleaved as a signal peptide. The tract at residues 19–267 (WDMVFPWQQL…RIEEKYFNHL (249 aa)) is non-LT domain. The LT domain stretch occupies residues 269–483 (HFDYVDIQSY…SKESDSTLKE (215 aa)). The active site involves Glu-312. Positions 459–483 (QIQNNEEQSSVPQEISKESDSTLKE) are disordered. A compositionally biased stretch (basic and acidic residues) spans 473-483 (ISKESDSTLKE).

It in the N-terminal section; belongs to the bacterial solute-binding protein 3 family. The protein in the C-terminal section; belongs to the transglycosylase Slt family.

Its subcellular location is the cell outer membrane. It catalyses the reaction Exolytic cleavage of the (1-&gt;4)-beta-glycosidic linkage between N-acetylmuramic acid (MurNAc) and N-acetylglucosamine (GlcNAc) residues in peptidoglycan, from either the reducing or the non-reducing ends of the peptidoglycan chains, with concomitant formation of a 1,6-anhydrobond in the MurNAc residue.. In terms of biological role, murein-degrading enzyme that degrades murein glycan strands and insoluble, high-molecular weight murein sacculi, with the concomitant formation of a 1,6-anhydromuramoyl product. Lytic transglycosylases (LTs) play an integral role in the metabolism of the peptidoglycan (PG) sacculus. Their lytic action creates space within the PG sacculus to allow for its expansion as well as for the insertion of various structures such as secretion systems and flagella. This is Membrane-bound lytic murein transglycosylase F from Actinobacillus pleuropneumoniae serotype 7 (strain AP76).